The chain runs to 280 residues: Phosphatidylglycerol--prolipoprotein diacylglyceryl transferase (280 aa).

4 helical membrane-spanning segments follow: residues 30–50 (WYGLAYVAGILLGWLYARRII), 71–91 (FLLWAAGGIVLGGRIGYILFY), 106–126 (IWNGGMSFHGGLLGTTLAIII), and 132–152 (AIPLWSLFDVVAAVVPIGLFF). Arginine 154 is an a 1,2-diacyl-sn-glycero-3-phospho-(1'-sn-glycerol) binding site. The next 3 helical transmembrane spans lie at 188-208 (QLYEAALEGIVLLVVLAWFVY), 217-237 (GLVTGIFVCGYAASRIFVEFF), and 251-271 (WLTMGMVLSLPMALVGIWAIA).

The protein belongs to the Lgt family.

It is found in the cell inner membrane. The catalysed reaction is L-cysteinyl-[prolipoprotein] + a 1,2-diacyl-sn-glycero-3-phospho-(1'-sn-glycerol) = an S-1,2-diacyl-sn-glyceryl-L-cysteinyl-[prolipoprotein] + sn-glycerol 1-phosphate + H(+). The protein operates within protein modification; lipoprotein biosynthesis (diacylglyceryl transfer). In terms of biological role, catalyzes the transfer of the diacylglyceryl group from phosphatidylglycerol to the sulfhydryl group of the N-terminal cysteine of a prolipoprotein, the first step in the formation of mature lipoproteins. The chain is Phosphatidylglycerol--prolipoprotein diacylglyceryl transferase from Rhizobium meliloti (strain 1021) (Ensifer meliloti).